A 111-amino-acid polypeptide reads, in one-letter code: Heat shock 70 kDa protein (111 aa).

Belongs to the heat shock protein 70 family.

The polypeptide is Heat shock 70 kDa protein (HSP70) (Hydra oligactis (Brown hydra)).